The sequence spans 727 residues: Probable acyl-activating enzyme 18, peroxisomal (727 aa).

The short motif at 725-727 (SRI) is the Microbody targeting signal element.

It belongs to the ATP-dependent AMP-binding enzyme family. In terms of tissue distribution, expressed in flowers.

The protein localises to the peroxisome. May be involved in the peroxisomal activation of 2,4-dichlorophenoxybutyric acid (2,4-DB), a precursor of active auxins that inhibit root growth. This is Probable acyl-activating enzyme 18, peroxisomal (AAE18) from Arabidopsis thaliana (Mouse-ear cress).